We begin with the raw amino-acid sequence, 538 residues long: Putative outer membrane porin BglH (538 aa).

The first 25 residues, 1–25, serve as a signal peptide directing secretion; it reads MFRRNLITSAILLMAPLAFSAQSLA. Positions 52-82 are disordered; sequence KDEEKKKYTPATVNRSVSTNDQGYAANPFPT. Residues 62–73 show a composition bias toward polar residues; sequence ATVNRSVSTNDQ.

This sequence belongs to the porin LamB (TC 1.B.3) family.

It localises to the cell outer membrane. In terms of biological role, may be a sugar porin with a broad carbohydrate specificity. The chain is Putative outer membrane porin BglH (bglH) from Shigella flexneri serotype 5b (strain 8401).